A 96-amino-acid chain; its full sequence is Large ribosomal subunit protein bL25 (96 aa).

This sequence belongs to the bacterial ribosomal protein bL25 family. Part of the 50S ribosomal subunit; part of the 5S rRNA/L5/L18/L25 subcomplex. Contacts the 5S rRNA. Binds to the 5S rRNA independently of L5 and L18.

This is one of the proteins that binds to the 5S RNA in the ribosome where it forms part of the central protuberance. This Buchnera aphidicola subsp. Schizaphis graminum (strain Sg) protein is Large ribosomal subunit protein bL25.